Reading from the N-terminus, the 413-residue chain is Argininosuccinate synthase (413 aa).

ATP is bound by residues 12-20 (AYSGGLDTS) and A39. The L-citrulline site is built by Y92 and S97. G122 contributes to the ATP binding site. T124, N128, and D129 together coordinate L-aspartate. N128 is an L-citrulline binding site. Residues R132, S189, S198, E274, and Y286 each coordinate L-citrulline.

It belongs to the argininosuccinate synthase family. Type 1 subfamily. In terms of assembly, homotetramer.

It localises to the cytoplasm. The enzyme catalyses L-citrulline + L-aspartate + ATP = 2-(N(omega)-L-arginino)succinate + AMP + diphosphate + H(+). It functions in the pathway amino-acid biosynthesis; L-arginine biosynthesis; L-arginine from L-ornithine and carbamoyl phosphate: step 2/3. The chain is Argininosuccinate synthase from Aliarcobacter butzleri (strain RM4018) (Arcobacter butzleri).